Reading from the N-terminus, the 503-residue chain is Maturase K (503 aa).

The protein belongs to the intron maturase 2 family. MatK subfamily.

It localises to the plastid. The protein localises to the chloroplast. Its function is as follows. Usually encoded in the trnK tRNA gene intron. Probably assists in splicing its own and other chloroplast group II introns. The sequence is that of Maturase K from Rosa acicularis (Prickly rose).